We begin with the raw amino-acid sequence, 226 residues long: Leucyl/phenylalanyl-tRNA--protein transferase (226 aa).

This sequence belongs to the L/F-transferase family.

The protein localises to the cytoplasm. It carries out the reaction N-terminal L-lysyl-[protein] + L-leucyl-tRNA(Leu) = N-terminal L-leucyl-L-lysyl-[protein] + tRNA(Leu) + H(+). It catalyses the reaction N-terminal L-arginyl-[protein] + L-leucyl-tRNA(Leu) = N-terminal L-leucyl-L-arginyl-[protein] + tRNA(Leu) + H(+). The enzyme catalyses L-phenylalanyl-tRNA(Phe) + an N-terminal L-alpha-aminoacyl-[protein] = an N-terminal L-phenylalanyl-L-alpha-aminoacyl-[protein] + tRNA(Phe). Functions in the N-end rule pathway of protein degradation where it conjugates Leu, Phe and, less efficiently, Met from aminoacyl-tRNAs to the N-termini of proteins containing an N-terminal arginine or lysine. This is Leucyl/phenylalanyl-tRNA--protein transferase from Bradyrhizobium sp. (strain ORS 278).